A 515-amino-acid polypeptide reads, in one-letter code: ATP synthase subunit alpha (515 aa).

171-178 (GDRQTGKT) is a binding site for ATP.

Belongs to the ATPase alpha/beta chains family. As to quaternary structure, F-type ATPases have 2 components, CF(1) - the catalytic core - and CF(0) - the membrane proton channel. CF(1) has five subunits: alpha(3), beta(3), gamma(1), delta(1), epsilon(1). CF(0) has three main subunits: a(1), b(2) and c(9-12). The alpha and beta chains form an alternating ring which encloses part of the gamma chain. CF(1) is attached to CF(0) by a central stalk formed by the gamma and epsilon chains, while a peripheral stalk is formed by the delta and b chains.

Its subcellular location is the cell inner membrane. The enzyme catalyses ATP + H2O + 4 H(+)(in) = ADP + phosphate + 5 H(+)(out). Produces ATP from ADP in the presence of a proton gradient across the membrane. The alpha chain is a regulatory subunit. This is ATP synthase subunit alpha from Xanthomonas oryzae pv. oryzae (strain MAFF 311018).